Reading from the N-terminus, the 389-residue chain is Ribonucleoside-diphosphate reductase subunit M2 (389 aa).

Serine 20 is modified (phosphoserine). Threonine 33 bears the Phosphothreonine mark. Residues 49–51 (RRI) carry the Cy motif. Fe cation contacts are provided by aspartate 138, glutamate 169, and histidine 172. Tyrosine 176 is a catalytic residue. Fe cation is bound by residues glutamate 232, glutamate 266, and histidine 269.

Belongs to the ribonucleoside diphosphate reductase small chain family. In terms of assembly, heterodimer of a large and a small subunit. Interacts (via Cy motif and when phosphorylated at Thr-33) with CCNF; the interaction occurs exclusively in G2 and early M. Requires Fe cation as cofactor. Phosphorylation on Ser-20 relieves the inhibitory effect on Wnt signaling. Phosphorylated on Thr-33 by CDK1 and CDK2; predominantly in G2 and M phase. Post-translationally, ubiquitinated by the SCF(CCNF) E3 ubiquitin-protein ligase complex; leading to its degradation by the proteasome.

The protein resides in the cytoplasm. The protein localises to the nucleus. The catalysed reaction is a 2'-deoxyribonucleoside 5'-diphosphate + [thioredoxin]-disulfide + H2O = a ribonucleoside 5'-diphosphate + [thioredoxin]-dithiol. Functionally, provides the precursors necessary for DNA synthesis. Catalyzes the biosynthesis of deoxyribonucleotides from the corresponding ribonucleotides. Inhibits Wnt signaling. The sequence is that of Ribonucleoside-diphosphate reductase subunit M2 (RRM2) from Macaca fascicularis (Crab-eating macaque).